A 611-amino-acid chain; its full sequence is Aspartate--tRNA(Asp/Asn) ligase (611 aa).

Glutamate 174 is an L-aspartate binding site. The aspartate stretch occupies residues 198–201; sequence QLFK. Arginine 220 is an L-aspartate binding site. ATP contacts are provided by residues 220 to 222 and glutamine 229; that span reads RDE. Histidine 467 provides a ligand contact to L-aspartate. Glutamate 501 lines the ATP pocket. Arginine 508 provides a ligand contact to L-aspartate. 553-556 is a binding site for ATP; sequence GLDR.

This sequence belongs to the class-II aminoacyl-tRNA synthetase family. Type 1 subfamily. As to quaternary structure, homodimer.

The protein resides in the cytoplasm. It catalyses the reaction tRNA(Asx) + L-aspartate + ATP = L-aspartyl-tRNA(Asx) + AMP + diphosphate. Aspartyl-tRNA synthetase with relaxed tRNA specificity since it is able to aspartylate not only its cognate tRNA(Asp) but also tRNA(Asn). Reaction proceeds in two steps: L-aspartate is first activated by ATP to form Asp-AMP and then transferred to the acceptor end of tRNA(Asp/Asn). The polypeptide is Aspartate--tRNA(Asp/Asn) ligase (Albidiferax ferrireducens (strain ATCC BAA-621 / DSM 15236 / T118) (Rhodoferax ferrireducens)).